Reading from the N-terminus, the 120-residue chain is NAD(P)H-quinone oxidoreductase subunit 3, chloroplastic (120 aa).

Helical transmembrane passes span 9 to 29 (IFWA…LISG), 64 to 84 (MFAL…PWAM), and 88 to 108 (VLGV…IVGS).

The protein belongs to the complex I subunit 3 family. As to quaternary structure, NDH is composed of at least 16 different subunits, 5 of which are encoded in the nucleus.

The protein localises to the plastid. The protein resides in the chloroplast thylakoid membrane. It catalyses the reaction a plastoquinone + NADH + (n+1) H(+)(in) = a plastoquinol + NAD(+) + n H(+)(out). The catalysed reaction is a plastoquinone + NADPH + (n+1) H(+)(in) = a plastoquinol + NADP(+) + n H(+)(out). Functionally, NDH shuttles electrons from NAD(P)H:plastoquinone, via FMN and iron-sulfur (Fe-S) centers, to quinones in the photosynthetic chain and possibly in a chloroplast respiratory chain. The immediate electron acceptor for the enzyme in this species is believed to be plastoquinone. Couples the redox reaction to proton translocation, and thus conserves the redox energy in a proton gradient. The sequence is that of NAD(P)H-quinone oxidoreductase subunit 3, chloroplastic from Illicium oligandrum (Star anise).